The sequence spans 711 residues: Early transcription factor 82 kDa subunit (711 aa).

Belongs to the poxviridae VETF large subunit family. Heterodimer of a 70 kDa and a 82 kDa subunit. Part of the early transcription complex composed of ETF, RAP94, and the DNA-directed RNA polymerase.

Its subcellular location is the virion. In terms of biological role, acts with RNA polymerase to initiate transcription from early gene promoters. Is recruited by the RPO-associated protein of 94 kDa (RAP94) to form the early transcription complex, which also contains the core RNA polymerase. ETF heterodimer binds to early gene promoters. The chain is Early transcription factor 82 kDa subunit (VETFL) from Oryctolagus cuniculus (Rabbit).